The following is a 144-amino-acid chain: Large ribosomal subunit protein uL14 (144 aa).

It belongs to the universal ribosomal protein uL14 family. Part of the 50S ribosomal subunit. Forms a cluster with proteins L3 and L24e, part of which may contact the 16S rRNA in 2 intersubunit bridges.

Its function is as follows. Binds to 23S rRNA. Forms part of two intersubunit bridges in the 70S ribosome. In Pyrobaculum arsenaticum (strain DSM 13514 / JCM 11321 / PZ6), this protein is Large ribosomal subunit protein uL14.